Reading from the N-terminus, the 1391-residue chain is DNA-directed RNA polymerase subunit beta' (1391 aa).

4 residues coordinate Zn(2+): Cys-72, Cys-74, Cys-87, and Cys-90. The Mg(2+) site is built by Asp-462, Asp-464, and Asp-466. Residues Cys-816, Cys-890, Cys-897, and Cys-900 each coordinate Zn(2+).

Belongs to the RNA polymerase beta' chain family. As to quaternary structure, the RNAP catalytic core consists of 2 alpha, 1 beta, 1 beta' and 1 omega subunit. When a sigma factor is associated with the core the holoenzyme is formed, which can initiate transcription. The cofactor is Mg(2+). Zn(2+) serves as cofactor.

The enzyme catalyses RNA(n) + a ribonucleoside 5'-triphosphate = RNA(n+1) + diphosphate. In terms of biological role, DNA-dependent RNA polymerase catalyzes the transcription of DNA into RNA using the four ribonucleoside triphosphates as substrates. The chain is DNA-directed RNA polymerase subunit beta' from Neisseria meningitidis serogroup C (strain 053442).